The sequence spans 370 residues: 2-oxoisovalerate dehydrogenase subunit beta, mitochondrial (370 aa).

Residues 1–25 constitute a mitochondrion transit peptide; the sequence is MLRGNNIKKVNSLLVRSFHSTVGNR. Thiamine diphosphate is bound at residue tyrosine 130. Glycine 156, leucine 158, threonine 159, and glutamate 209 together coordinate K(+).

As to quaternary structure, heterotetramer of 2 alpha and 2 beta chains. It depends on thiamine diphosphate as a cofactor.

The protein localises to the mitochondrion matrix. It catalyses the reaction N(6)-[(R)-lipoyl]-L-lysyl-[protein] + 3-methyl-2-oxobutanoate + H(+) = N(6)-[(R)-S(8)-2-methylpropanoyldihydrolipoyl]-L-lysyl-[protein] + CO2. The branched-chain alpha-keto dehydrogenase complex catalyzes the overall conversion of alpha-keto acids to acyl-CoA and CO(2). It contains multiple copies of three enzymatic components: branched-chain alpha-keto acid decarboxylase (E1), lipoamide acyltransferase (E2) and lipoamide dehydrogenase (E3). This Dictyostelium discoideum (Social amoeba) protein is 2-oxoisovalerate dehydrogenase subunit beta, mitochondrial (bkdB).